A 209-amino-acid chain; its full sequence is Ribonuclease HII (209 aa).

Residues 7-198 form the RNase H type-2 domain; sequence GPVAGVDEAG…VAKAHQEWLH (192 aa). 3 residues coordinate a divalent metal cation: Asp-13, Glu-14, and Asp-107.

It belongs to the RNase HII family. The cofactor is Mn(2+). It depends on Mg(2+) as a cofactor.

It is found in the cytoplasm. It catalyses the reaction Endonucleolytic cleavage to 5'-phosphomonoester.. Endonuclease that specifically degrades the RNA of RNA-DNA hybrids. The sequence is that of Ribonuclease HII from Corynebacterium glutamicum (strain ATCC 13032 / DSM 20300 / JCM 1318 / BCRC 11384 / CCUG 27702 / LMG 3730 / NBRC 12168 / NCIMB 10025 / NRRL B-2784 / 534).